A 57-amino-acid polypeptide reads, in one-letter code: Large ribosomal subunit protein bL33 (57 aa).

Belongs to the bacterial ribosomal protein bL33 family.

This chain is Large ribosomal subunit protein bL33, found in Akkermansia muciniphila (strain ATCC BAA-835 / DSM 22959 / JCM 33894 / BCRC 81048 / CCUG 64013 / CIP 107961 / Muc).